A 468-amino-acid polypeptide reads, in one-letter code: 6-phosphogluconate dehydrogenase, decarboxylating (468 aa).

NADP(+) is bound by residues 10–15, 33–35, 74–76, and Asn-102; these read GMAVMG, NRT, and VQS. Substrate is bound by residues Asn-102 and 128–130; that span reads SGG. The active-site Proton acceptor is the Lys-182. Substrate is bound at residue 185 to 186; sequence HN. Residue Glu-189 is the Proton donor of the active site. The substrate site is built by Tyr-190, Lys-259, Arg-286, Arg-445, and His-451.

The protein belongs to the 6-phosphogluconate dehydrogenase family. In terms of assembly, homodimer.

The catalysed reaction is 6-phospho-D-gluconate + NADP(+) = D-ribulose 5-phosphate + CO2 + NADPH. It functions in the pathway carbohydrate degradation; pentose phosphate pathway; D-ribulose 5-phosphate from D-glucose 6-phosphate (oxidative stage): step 3/3. Catalyzes the oxidative decarboxylation of 6-phosphogluconate to ribulose 5-phosphate and CO(2), with concomitant reduction of NADP to NADPH. The chain is 6-phosphogluconate dehydrogenase, decarboxylating (gnd) from Buchnera aphidicola subsp. Acyrthosiphon pisum (strain APS) (Acyrthosiphon pisum symbiotic bacterium).